Consider the following 1943-residue polypeptide: Protocadherin-15 (1943 aa).

Residues 1-26 form the signal peptide; the sequence is MFLQFAVWKCLPHGILIASLLVVSWG. Residues 27–1381 are Extracellular-facing; that stretch reads QYDDDWQYED…GESLGYTEGA (1355 aa). A disulfide bridge links Cys-37 with Cys-125. 11 consecutive Cadherin domains span residues 45–152, 153–270, 283–400, 401–514, 515–621, 622–722, 724–824, 825–931, 932–1040, 1042–1149, and 1150–1264; these read PATI…SPTF, KHES…GPMF, RPLT…SPYF, TMPS…TPTF, PEIS…PPRF, PQLM…APVF, PYLP…SPVF, TNST…PPVF, SKRI…IPRF, QEEY…PPVF, and QKKF…PPTL. 3 N-linked (GlcNAc...) asparagine glycosylation sites follow: Asn-57, Asn-102, and Asn-206. 7 N-linked (GlcNAc...) asparagine glycosylation sites follow: Asn-424, Asn-564, Asn-667, Asn-729, Asn-773, Asn-826, and Asn-856. N-linked (GlcNAc...) asparagine glycosylation is found at Asn-1069, Asn-1089, and Asn-1180. The chain crosses the membrane as a helical span at residues 1382 to 1402; that stretch reads LLALAFIIILCCIPAILVVLV. At 1403 to 1943 the chain is on the cytoplasmic side; sequence SYRQFKVRQA…VQPHSQSTSL (541 aa). Disordered regions lie at residues 1425-1453, 1475-1533, and 1714-1865; these read PAAK…AHLY, GNNS…STHN, and ILNS…EPHR. The span at 1431-1449 shows a compositional bias: pro residues; that stretch reads APVPAAPAPPPPPPPPPPG. 2 stretches are compositionally biased toward basic and acidic residues: residues 1480–1489 and 1498–1509; these read PEDRSSHRDG and ESHEPAHVEGPL. Pro residues-rich tracts occupy residues 1742-1760 and 1769-1779; these read PHPP…PRPP and PLSPPNPPPPQ. A compositionally biased stretch (low complexity) spans 1784-1795; sequence SLPISTPPTSSL. Residues 1796–1821 show a composition bias toward pro residues; it reads PLPPPLSLPPPPRPPAPRLFPQPPST. Over residues 1822 to 1834 the composition is skewed to low complexity; sequence SIPSTDSISAPAA. Positions 1846 to 1858 are enriched in polar residues; sequence TTSTTQPPASNPQ.

Antiparallel heterodimer with CDH23. Found in a complex with TMIE and LHFPL5. Interacts with LHFPL5/TMHS; this interaction is required for efficient localization to hair bundles. Interacts with MYO7A. Interacts with USH1G; this interaction may recruit USH1G to the plasma membrane. Interacts with TOMT. Isoforms CD1 and CD3 interact with TMC1 (via N-terminus) and TMC2 (via N-terminus). Interacts with PIEZO1. Expressed in brain and sensory epithelium of the developing inner ear. Expressed in the retina, in the photoreceptor inner segments, the outer plexiform layer, the inner nuclei layer and the ganglion cell layer and, more diffusely in the inner plexiform layer (at protein level). Not detected in the retinal pigment epithelium (at protein level). Expressed in the spleen, dorsal root ganglion, dorsal aspect of neural tube, floor plate and ependymal cells adjacent to the neural canal.

It is found in the cell membrane. It localises to the secreted. Functionally, calcium-dependent cell-adhesion protein. Required for inner ear neuroepithelial cell elaboration and cochlear function. Probably involved in the maintenance of normal retinal function. This Mus musculus (Mouse) protein is Protocadherin-15 (Pcdh15).